The chain runs to 163 residues: Large ribosomal subunit protein uL10 (163 aa).

This sequence belongs to the universal ribosomal protein uL10 family. In terms of assembly, part of the ribosomal stalk of the 50S ribosomal subunit. The N-terminus interacts with L11 and the large rRNA to form the base of the stalk. The C-terminus forms an elongated spine to which L12 dimers bind in a sequential fashion forming a multimeric L10(L12)X complex.

Functionally, forms part of the ribosomal stalk, playing a central role in the interaction of the ribosome with GTP-bound translation factors. This is Large ribosomal subunit protein uL10 from Mannheimia succiniciproducens (strain KCTC 0769BP / MBEL55E).